The sequence spans 86 residues: Actinorhodin polyketide synthase acyl carrier protein (86 aa).

A Carrier domain is found at 4-82 (LLTTDDLRRA…ELLDLINGAL (79 aa)). O-(pantetheine 4'-phosphoryl)serine is present on Ser-42.

4'-phosphopantetheine is transferred from CoA to a specific serine of the apo-ACP-like protein.

It participates in antibiotic biosynthesis; actinorhodin biosynthesis. Its function is as follows. Acyl carrier protein. The protein is Actinorhodin polyketide synthase acyl carrier protein of Streptomyces coelicolor (strain ATCC BAA-471 / A3(2) / M145).